We begin with the raw amino-acid sequence, 398 residues long: MYLTKEEEQILNGEAGETLRQAIQILVALGDIYGADRLIPIKSAQIAGVSYKTIGDAGLEWISDLEGQVKVPAILNPAGMDLEDWERLRISPEFAEKQKEIVQAYKKLGIRCECTCTPYTLEGFSVSYGDHLAWSESSAISYANSVIGARTNREGGPSALSAALLGKTANYGFHLDKNRVPEVSVSVECSLKESDYGALGYVAGKLIGNRVPIFQLRSKPEKDELKSLGAAMAASGAVALYHVKGVTPEACRMDFEEPEEKIIIERSQLDEVYESKGKEPELITIGCPHCSAAELKKAAELLKGKTVSKETWIFTSRELAERYPEYIRTIEESGAKVVCDTCMVVSPATNSYSCVMVNSGKAFAYVPGMCGAQSVYGNMEACINKATGGKERKAGDSH.

G48, V49, S50, N76, and P77 together coordinate (R)-5-phosphomevalonate. A [4Fe-4S] cluster-binding site is contributed by C116. The (R)-5-phosphomevalonate site is built by E136 and S137. [4Fe-4S] cluster-binding residues include C287 and C342. K361 serves as a coordination point for (R)-5-phosphomevalonate.

The protein belongs to the AcnX type II large subunit family. As to quaternary structure, heterodimer composed of a large subunit (PMDh-L) and a small subunit (PMDh-S). [4Fe-4S] cluster is required as a cofactor.

It carries out the reaction (R)-5-phosphomevalonate = (2E)-3-methyl-5-phosphooxypent-2-enoate + H2O. The protein operates within isoprenoid biosynthesis; isopentenyl diphosphate biosynthesis via mevalonate pathway. Component of a hydro-lyase that catalyzes the dehydration of mevalonate 5-phosphate (MVA5P) to form trans-anhydromevalonate 5-phosphate (tAHMP). Involved in the archaeal mevalonate (MVA) pathway, which provides fundamental precursors for isoprenoid biosynthesis, such as isopentenyl diphosphate (IPP) and dimethylallyl diphosphate (DMAPP). In Methanosarcina mazei (strain ATCC BAA-159 / DSM 3647 / Goe1 / Go1 / JCM 11833 / OCM 88) (Methanosarcina frisia), this protein is Phosphomevalonate dehydratase large subunit.